The following is a 485-amino-acid chain: Ribulose bisphosphate carboxylase large chain (485 aa).

Positions 124 and 174 each coordinate substrate. The Proton acceptor role is filled by lysine 176. Lysine 178 is a binding site for substrate. Positions 202, 204, and 205 each coordinate Mg(2+). Position 202 is an N6-carboxylysine (lysine 202). The active-site Proton acceptor is the histidine 294. Substrate-binding residues include arginine 295, histidine 327, and serine 379.

The protein belongs to the RuBisCO large chain family. Type I subfamily. Heterohexadecamer of 8 large chains and 8 small chains. Requires Mg(2+) as cofactor.

The enzyme catalyses 2 (2R)-3-phosphoglycerate + 2 H(+) = D-ribulose 1,5-bisphosphate + CO2 + H2O. The catalysed reaction is D-ribulose 1,5-bisphosphate + O2 = 2-phosphoglycolate + (2R)-3-phosphoglycerate + 2 H(+). Its function is as follows. RuBisCO catalyzes two reactions: the carboxylation of D-ribulose 1,5-bisphosphate, the primary event in carbon dioxide fixation, as well as the oxidative fragmentation of the pentose substrate. Both reactions occur simultaneously and in competition at the same active site. This Rhodopseudomonas palustris (strain ATCC BAA-98 / CGA009) protein is Ribulose bisphosphate carboxylase large chain.